A 142-amino-acid chain; its full sequence is NTF2-related export protein 2 (142 aa).

The 120-residue stretch at 17 to 136 (AAEEFVNIYY…WKIASDCFRF (120 aa)) folds into the NTF2 domain.

Associates with NXF1, NXF2, NXF3 and NXF5.

It is found in the nucleus. It localises to the cytoplasm. Functionally, regulator of protein export for NES-containing proteins. Also plays a role in mRNA nuclear export. In Homo sapiens (Human), this protein is NTF2-related export protein 2.